A 481-amino-acid chain; its full sequence is Subtilisin-like protease 1 (481 aa).

The signal sequence occupies residues 1–19 (MGVFRFISISLAAVSAANA). A propeptide spanning residues 20-116 (AQILSMPHAQ…VEPDTIISVH (97 aa)) is cleaved from the precursor. In terms of domain architecture, Inhibitor I9 spans 34 to 115 (SYIVMMKDDT…FVEPDTIISV (82 aa)). The 275-residue stretch at 126-400 (SWGLARISSS…NVLINNGGAK (275 aa)) folds into the Peptidase S8 domain. Residues Asp158 and His190 each act as charge relay system in the active site. A disordered region spans residues 175–198 (GSNQVNDGDDNDRSGHGTHTSGTM). A glycan (N-linked (GlcNAc...) asparagine) is linked at Asn251. The disordered stretch occupies residues 281–312 (GNDNTDARSSSPASEPSVCTVGASAEDDSRSS). A compositionally biased stretch (polar residues) spans 282 to 294 (NDNTDARSSSPAS). Ser345 serves as the catalytic Charge relay system. The interval 379–455 (ASISDVGPGT…HPHTPFPGGD (77 aa)) is disordered. The segment covering 424 to 450 (PQQPAPGEPSTPAPAPMPPTPQHPHTP) has biased composition (pro residues).

It belongs to the peptidase S8 family.

The protein resides in the secreted. Its function is as follows. Secreted subtilisin-like serine protease with keratinolytic activity that contributes to pathogenicity. This is Subtilisin-like protease 1 (SUB1) from Arthroderma gypseum (strain ATCC MYA-4604 / CBS 118893) (Microsporum gypseum).